Reading from the N-terminus, the 340-residue chain is CMP-sialic acid transporter 1 (340 aa).

The Cytoplasmic segment spans residues 1–5 (MAATP). The helical transmembrane segment at 6-26 (WYFVAVLLTILTSSQGILTTL) threads the bilayer. Residues 27–36 (SQSDGGYKYD) lie on the Lumenal side of the membrane. A helical transmembrane segment spans residues 37 to 57 (YATVPFLAEVFKLIISGLFLW). The Cytoplasmic segment spans residues 58–78 (REMRTSSSTTSRITTDWKSVR). The helical transmembrane segment at 79–99 (LFVIPSLIYLIHNNVQFATLT) threads the bilayer. The Lumenal portion of the chain corresponds to 100–102 (YVD). A helical membrane pass occupies residues 103-125 (TSTYQIMGNLKIVTTGILFRLFL). The Cytoplasmic segment spans residues 126–168 (KRKLSKLQWMAIGLLAVGTTTSQVKGCGEASCDSLFTAPIQGY). The chain crosses the membrane as a helical span at residues 169 to 189 (LLGILSAGLSALAGIYTEFLM). The Lumenal portion of the chain corresponds to 190 to 200 (KRNNDTLYWQN). A helical membrane pass occupies residues 201 to 217 (LQLYTFGSLFNVARLIA). Residues 218–238 (DDFRHGFEKGPWWQRIFDGYS) are Cytoplasmic-facing. The chain crosses the membrane as a helical span at residues 239 to 259 (ITTWLVVLNLGSTGLLVSWLM). Residues 260–282 (KYADNIVKVYSTSMAMLLTMVAS) lie on the Lumenal side of the membrane. Residues 283–303 (IYLFSFKPTLQLFLGIVICIM) traverse the membrane as a helical segment. Residues 304 to 340 (SLHMYFAPPHTLVDLPVTNEAHAKTLKQVVVEEKTDS) lie on the Cytoplasmic side of the membrane.

The protein belongs to the nucleotide-sugar transporter family. CMP-Sialate:CMP antiporter (TC 2.A.7.12) subfamily.

The protein localises to the golgi apparatus membrane. Functionally, essential protein. Sugar transporter involved in the transport of CMP-sialic acid from the cytoplasm into the Golgi. This Arabidopsis thaliana (Mouse-ear cress) protein is CMP-sialic acid transporter 1.